The chain runs to 611 residues: Chaperone protein HscA (611 aa).

It belongs to the heat shock protein 70 family.

Its function is as follows. Chaperone involved in the maturation of iron-sulfur cluster-containing proteins. Has a low intrinsic ATPase activity which is markedly stimulated by HscB. Involved in the maturation of IscU. This chain is Chaperone protein HscA, found in Buchnera aphidicola subsp. Acyrthosiphon pisum (strain 5A).